Reading from the N-terminus, the 63-residue chain is MGLKAKHKENLCSDSERSKRLYVWIALAIVLSDFTSIFSHWIWGLLILYLQTLMDLPTFVMNV.

The helical transmembrane segment at 21-43 (LYVWIALAIVLSDFTSIFSHWIW) threads the bilayer.

Belongs to the Leviviricetes lysis protein family.

The protein resides in the host cell inner membrane. It is found in the host cell outer membrane. Its function is as follows. Induces the formation of specific membrane adhesion sites between the inner and outer membranes, apparently leading to host cell lysis. Lysis may be performed via activation of host murein hydrolases. In Escherichia coli (Bacteriophage GA), this protein is Lysis protein.